Here is a 242-residue protein sequence, read N- to C-terminus: Phosphoribosylaminoimidazole-succinocarboxamide synthase (242 aa).

The protein belongs to the SAICAR synthetase family.

It carries out the reaction 5-amino-1-(5-phospho-D-ribosyl)imidazole-4-carboxylate + L-aspartate + ATP = (2S)-2-[5-amino-1-(5-phospho-beta-D-ribosyl)imidazole-4-carboxamido]succinate + ADP + phosphate + 2 H(+). It participates in purine metabolism; IMP biosynthesis via de novo pathway; 5-amino-1-(5-phospho-D-ribosyl)imidazole-4-carboxamide from 5-amino-1-(5-phospho-D-ribosyl)imidazole-4-carboxylate: step 1/2. In Prochlorococcus marinus (strain MIT 9303), this protein is Phosphoribosylaminoimidazole-succinocarboxamide synthase.